The chain runs to 123 residues: Ribosome-binding factor A (123 aa).

The protein belongs to the RbfA family. Monomer. Binds 30S ribosomal subunits, but not 50S ribosomal subunits or 70S ribosomes.

The protein resides in the cytoplasm. Functionally, one of several proteins that assist in the late maturation steps of the functional core of the 30S ribosomal subunit. Associates with free 30S ribosomal subunits (but not with 30S subunits that are part of 70S ribosomes or polysomes). Required for efficient processing of 16S rRNA. May interact with the 5'-terminal helix region of 16S rRNA. The polypeptide is Ribosome-binding factor A (Lactobacillus johnsonii (strain CNCM I-12250 / La1 / NCC 533)).